The primary structure comprises 268 residues: Interleukin-1 alpha (268 aa).

Positions 1–112 (MAKVPDLFED…NTEEEIIKPR (112 aa)) are excised as a propeptide. Lys82 is modified (N6-acetyllysine). A nuclear localization signal (NLS) region spans residues 82 to 86 (KKRRL). Residue Ser87 is modified to Phosphoserine. Asn102 and Asn141 each carry an N-linked (GlcNAc...) asparagine glycan.

It belongs to the IL-1 family. As to quaternary structure, monomer. Interacts with TMED10; the interaction mediates the translocation from the cytoplasm into the ERGIC (endoplasmic reticulum-Golgi intermediate compartment) and thereby secretion. Interacts with IL1R1. Interacts with S100A13; this interaction is the first step in the export of IL1A, followed by direct translocation of this complex across the plasma membrane. Acetylated within its nuclear localization sequence, which impacts subcellular localization. Post-translationally, proteolytic processed by CAPN1 in a calcium-dependent manner. Cleavage from 31 kDa precursor to 18 kDa biologically active molecules. In terms of processing, phosphorylated. Phosphorylation greatly enhances susceptibility to digestion and promotes the conversion of pre-IL1A alpha to the biologically active IL1A.

It localises to the nucleus. The protein localises to the cytoplasm. It is found in the secreted. Cytokine constitutively present intracellularly in nearly all resting non-hematopoietic cells that plays an important role in inflammation and bridges the innate and adaptive immune systems. After binding to its receptor IL1R1 together with its accessory protein IL1RAP, forms the high affinity interleukin-1 receptor complex. Signaling involves the recruitment of adapter molecules such as MYD88, IRAK1 or IRAK4. In turn, mediates the activation of NF-kappa-B and the three MAPK pathways p38, p42/p44 and JNK pathways. Within the cell, acts as an alarmin and cell death results in its liberation in the extracellular space after disruption of the cell membrane to induce inflammation and alert the host to injury or damage. In addition to its role as a danger signal, which occurs when the cytokine is passively released by cell necrosis, directly senses DNA damage and acts as signal for genotoxic stress without loss of cell integrity. This Bubalus carabanensis (Swamp type water buffalo) protein is Interleukin-1 alpha (IL1A).